Reading from the N-terminus, the 364-residue chain is DNA replication and repair protein RecF (364 aa).

23 to 30 (GPNGIGKS) is an ATP binding site.

This sequence belongs to the RecF family.

It is found in the cytoplasm. The RecF protein is involved in DNA metabolism; it is required for DNA replication and normal SOS inducibility. RecF binds preferentially to single-stranded, linear DNA. It also seems to bind ATP. This Synechococcus sp. (strain CC9605) protein is DNA replication and repair protein RecF.